The chain runs to 95 residues: Large ribosomal subunit protein bL25 (95 aa).

It belongs to the bacterial ribosomal protein bL25 family. In terms of assembly, part of the 50S ribosomal subunit; part of the 5S rRNA/L5/L18/L25 subcomplex. Contacts the 5S rRNA. Binds to the 5S rRNA independently of L5 and L18.

This is one of the proteins that binds to the 5S RNA in the ribosome where it forms part of the central protuberance. In Actinobacillus pleuropneumoniae serotype 5b (strain L20), this protein is Large ribosomal subunit protein bL25.